The sequence spans 73 residues: Small ribosomal subunit protein bS18c (73 aa).

It belongs to the bacterial ribosomal protein bS18 family. As to quaternary structure, part of the 30S ribosomal subunit.

The protein localises to the plastid. Its subcellular location is the chloroplast. This Nephroselmis olivacea (Green alga) protein is Small ribosomal subunit protein bS18c.